The following is a 257-amino-acid chain: Thiazole synthase (257 aa).

Lys98 serves as the catalytic Schiff-base intermediate with DXP. Residues Gly159, 185–186 (AG), and 207–208 (NT) contribute to the 1-deoxy-D-xylulose 5-phosphate site.

The protein belongs to the ThiG family. In terms of assembly, homotetramer. Forms heterodimers with either ThiH or ThiS.

It localises to the cytoplasm. It catalyses the reaction [ThiS sulfur-carrier protein]-C-terminal-Gly-aminoethanethioate + 2-iminoacetate + 1-deoxy-D-xylulose 5-phosphate = [ThiS sulfur-carrier protein]-C-terminal Gly-Gly + 2-[(2R,5Z)-2-carboxy-4-methylthiazol-5(2H)-ylidene]ethyl phosphate + 2 H2O + H(+). The protein operates within cofactor biosynthesis; thiamine diphosphate biosynthesis. Functionally, catalyzes the rearrangement of 1-deoxy-D-xylulose 5-phosphate (DXP) to produce the thiazole phosphate moiety of thiamine. Sulfur is provided by the thiocarboxylate moiety of the carrier protein ThiS. In vitro, sulfur can be provided by H(2)S. The chain is Thiazole synthase from Anaeromyxobacter dehalogenans (strain 2CP-C).